A 216-amino-acid chain; its full sequence is Octanoyltransferase (216 aa).

The 176-residue stretch at 32 to 207 (PDSQDEIWLV…QLVKHLDYAE (176 aa)) folds into the BPL/LPL catalytic domain. Residues 71–78 (RGGQVTYH), 138–140 (SLG), and 151–153 (GLA) each bind substrate. Cys169 serves as the catalytic Acyl-thioester intermediate.

Belongs to the LipB family.

The protein resides in the cytoplasm. The enzyme catalyses octanoyl-[ACP] + L-lysyl-[protein] = N(6)-octanoyl-L-lysyl-[protein] + holo-[ACP] + H(+). It participates in protein modification; protein lipoylation via endogenous pathway; protein N(6)-(lipoyl)lysine from octanoyl-[acyl-carrier-protein]: step 1/2. Catalyzes the transfer of endogenously produced octanoic acid from octanoyl-acyl-carrier-protein onto the lipoyl domains of lipoate-dependent enzymes. Lipoyl-ACP can also act as a substrate although octanoyl-ACP is likely to be the physiological substrate. This chain is Octanoyltransferase, found in Pseudomonas putida (strain ATCC 47054 / DSM 6125 / CFBP 8728 / NCIMB 11950 / KT2440).